A 382-amino-acid polypeptide reads, in one-letter code: Dual-specificity RNA methyltransferase RlmN (382 aa).

Glu96 acts as the Proton acceptor in catalysis. The Radical SAM core domain occupies 102–342; it reads QGKRGTLCVS…VRTTRGEDID (241 aa). A disulfide bridge connects residues Cys109 and Cys345. Cys116, Cys120, and Cys123 together coordinate [4Fe-4S] cluster. S-adenosyl-L-methionine is bound by residues 170 to 171, Ser202, 224 to 226, and Asn302; these read GE and SLH. Cys345 acts as the S-methylcysteine intermediate in catalysis.

This sequence belongs to the radical SAM superfamily. RlmN family. [4Fe-4S] cluster serves as cofactor.

It localises to the cytoplasm. It catalyses the reaction adenosine(2503) in 23S rRNA + 2 reduced [2Fe-2S]-[ferredoxin] + 2 S-adenosyl-L-methionine = 2-methyladenosine(2503) in 23S rRNA + 5'-deoxyadenosine + L-methionine + 2 oxidized [2Fe-2S]-[ferredoxin] + S-adenosyl-L-homocysteine. The catalysed reaction is adenosine(37) in tRNA + 2 reduced [2Fe-2S]-[ferredoxin] + 2 S-adenosyl-L-methionine = 2-methyladenosine(37) in tRNA + 5'-deoxyadenosine + L-methionine + 2 oxidized [2Fe-2S]-[ferredoxin] + S-adenosyl-L-homocysteine. Functionally, specifically methylates position 2 of adenine 2503 in 23S rRNA and position 2 of adenine 37 in tRNAs. m2A2503 modification seems to play a crucial role in the proofreading step occurring at the peptidyl transferase center and thus would serve to optimize ribosomal fidelity. The protein is Dual-specificity RNA methyltransferase RlmN of Pseudomonas fluorescens (strain ATCC BAA-477 / NRRL B-23932 / Pf-5).